The following is a 261-amino-acid chain: Small ribosomal subunit protein mS23 (261 aa).

The tract at residues E228 to A261 is disordered.

The protein belongs to the mitochondrion-specific ribosomal protein mS23 family. As to quaternary structure, component of the mitochondrial small ribosomal subunit.

The protein localises to the mitochondrion. The protein is Small ribosomal subunit protein mS23 (rsm25) of Aspergillus oryzae (strain ATCC 42149 / RIB 40) (Yellow koji mold).